Reading from the N-terminus, the 393-residue chain is Pyrimidine monooxygenase RutA (393 aa).

Residues 79 to 80, asparagine 145, glutamate 154, 170 to 171, and serine 220 each bind FMN; these read IK and RY.

Belongs to the NtaA/SnaA/DszA monooxygenase family. RutA subfamily.

The enzyme catalyses uracil + FMNH2 + NADH + O2 = (Z)-3-ureidoacrylate + FMN + NAD(+) + H2O + H(+). The catalysed reaction is thymine + FMNH2 + NADH + O2 = (Z)-2-methylureidoacrylate + FMN + NAD(+) + H2O + H(+). Its function is as follows. Catalyzes the pyrimidine ring opening between N-3 and C-4 by an unusual flavin hydroperoxide-catalyzed mechanism, adding oxygen atoms in the process to yield ureidoacrylate peracid, that immediately reacts with FMN forming ureidoacrylate and FMN-N(5)-oxide. The FMN-N(5)-oxide reacts spontaneously with NADH to produce FMN. Requires the flavin reductase RutF to regenerate FMN in vivo. This Escherichia coli O9:H4 (strain HS) protein is Pyrimidine monooxygenase RutA.